The primary structure comprises 218 residues: Probable cutinase 3 (218 aa).

The first 17 residues, 1-17 (MSLRSVLVAALAALAVA), serve as a signal peptide directing secretion. 2 disulfides stabilise this stretch: Cys-41/Cys-120 and Cys-67/Cys-81. Ser-131 acts as the Nucleophile in catalysis. Residues Cys-182 and Cys-189 are joined by a disulfide bond. Asp-186 is a catalytic residue. The Proton donor/acceptor role is filled by His-199.

The protein belongs to the cutinase family.

It is found in the secreted. The catalysed reaction is cutin + H2O = cutin monomers.. In terms of biological role, catalyzes the hydrolysis of complex carboxylic polyesters found in the cell wall of plants. Degrades cutin, a macromolecule that forms the structure of the plant cuticle. This is Probable cutinase 3 from Aspergillus terreus (strain NIH 2624 / FGSC A1156).